The sequence spans 323 residues: Acetyl-coenzyme A carboxylase carboxyl transferase subunit alpha 1 (323 aa).

The region spanning 39–293 (RLSKKSQQLT…RRALGDSLRQ (255 aa)) is the CoA carboxyltransferase C-terminal domain.

The protein belongs to the AccA family. Acetyl-CoA carboxylase is a heterohexamer composed of biotin carboxyl carrier protein (AccB), biotin carboxylase (AccC) and two subunits each of ACCase subunit alpha (AccA) and ACCase subunit beta (AccD).

The protein resides in the cytoplasm. It catalyses the reaction N(6)-carboxybiotinyl-L-lysyl-[protein] + acetyl-CoA = N(6)-biotinyl-L-lysyl-[protein] + malonyl-CoA. The protein operates within lipid metabolism; malonyl-CoA biosynthesis; malonyl-CoA from acetyl-CoA: step 1/1. In terms of biological role, component of the acetyl coenzyme A carboxylase (ACC) complex. First, biotin carboxylase catalyzes the carboxylation of biotin on its carrier protein (BCCP) and then the CO(2) group is transferred by the carboxyltransferase to acetyl-CoA to form malonyl-CoA. Does not confer resistance to the endogenous polyketide antibiotic thailandamide, does not confer resistance to thailandamide when expressed in S.typhimurium. The chain is Acetyl-coenzyme A carboxylase carboxyl transferase subunit alpha 1 from Burkholderia thailandensis (strain ATCC 700388 / DSM 13276 / CCUG 48851 / CIP 106301 / E264).